A 42-amino-acid polypeptide reads, in one-letter code: Large ribosomal subunit protein bL36 (42 aa).

This sequence belongs to the bacterial ribosomal protein bL36 family.

The sequence is that of Large ribosomal subunit protein bL36 from Wolbachia pipientis wMel.